Here is a 193-residue protein sequence, read N- to C-terminus: Xanthine phosphoribosyltransferase (193 aa).

Positions 20 and 27 each coordinate xanthine. Residue 128–132 (ANGQA) participates in 5-phospho-alpha-D-ribose 1-diphosphate binding. Lysine 156 is a binding site for xanthine.

It belongs to the purine/pyrimidine phosphoribosyltransferase family. Xpt subfamily. As to quaternary structure, homodimer.

The protein localises to the cytoplasm. It catalyses the reaction XMP + diphosphate = xanthine + 5-phospho-alpha-D-ribose 1-diphosphate. It participates in purine metabolism; XMP biosynthesis via salvage pathway; XMP from xanthine: step 1/1. Its function is as follows. Converts the preformed base xanthine, a product of nucleic acid breakdown, to xanthosine 5'-monophosphate (XMP), so it can be reused for RNA or DNA synthesis. The sequence is that of Xanthine phosphoribosyltransferase from Streptococcus pneumoniae serotype 4 (strain ATCC BAA-334 / TIGR4).